Here is a 379-residue protein sequence, read N- to C-terminus: Queuine tRNA-ribosyltransferase (379 aa).

The Proton acceptor role is filled by Asp94. Substrate is bound by residues 94–98, Asp148, Gln191, and Gly218; that span reads DSGGF. The RNA binding stretch occupies residues 249–255; the sequence is GVGSPDA. Asp268 serves as the catalytic Nucleophile. The RNA binding; important for wobble base 34 recognition stretch occupies residues 273–277; sequence TRIAR. Positions 306, 308, 311, and 337 each coordinate Zn(2+).

It belongs to the queuine tRNA-ribosyltransferase family. As to quaternary structure, homodimer. Within each dimer, one monomer is responsible for RNA recognition and catalysis, while the other monomer binds to the replacement base PreQ1. Zn(2+) is required as a cofactor.

The enzyme catalyses 7-aminomethyl-7-carbaguanine + guanosine(34) in tRNA = 7-aminomethyl-7-carbaguanosine(34) in tRNA + guanine. It participates in tRNA modification; tRNA-queuosine biosynthesis. Functionally, catalyzes the base-exchange of a guanine (G) residue with the queuine precursor 7-aminomethyl-7-deazaguanine (PreQ1) at position 34 (anticodon wobble position) in tRNAs with GU(N) anticodons (tRNA-Asp, -Asn, -His and -Tyr). Catalysis occurs through a double-displacement mechanism. The nucleophile active site attacks the C1' of nucleotide 34 to detach the guanine base from the RNA, forming a covalent enzyme-RNA intermediate. The proton acceptor active site deprotonates the incoming PreQ1, allowing a nucleophilic attack on the C1' of the ribose to form the product. After dissociation, two additional enzymatic reactions on the tRNA convert PreQ1 to queuine (Q), resulting in the hypermodified nucleoside queuosine (7-(((4,5-cis-dihydroxy-2-cyclopenten-1-yl)amino)methyl)-7-deazaguanosine). This is Queuine tRNA-ribosyltransferase from Staphylococcus haemolyticus (strain JCSC1435).